The sequence spans 81 residues: NAD(P)H-quinone oxidoreductase subunit O (81 aa).

Belongs to the complex I NdhO subunit family. NDH-1 can be composed of about 15 different subunits; different subcomplexes with different compositions have been identified which probably have different functions.

The protein localises to the cellular thylakoid membrane. The catalysed reaction is a plastoquinone + NADH + (n+1) H(+)(in) = a plastoquinol + NAD(+) + n H(+)(out). It catalyses the reaction a plastoquinone + NADPH + (n+1) H(+)(in) = a plastoquinol + NADP(+) + n H(+)(out). NDH-1 shuttles electrons from an unknown electron donor, via FMN and iron-sulfur (Fe-S) centers, to quinones in the respiratory and/or the photosynthetic chain. The immediate electron acceptor for the enzyme in this species is believed to be plastoquinone. Couples the redox reaction to proton translocation, and thus conserves the redox energy in a proton gradient. Cyanobacterial NDH-1 also plays a role in inorganic carbon-concentration. This chain is NAD(P)H-quinone oxidoreductase subunit O, found in Prochlorococcus marinus (strain MIT 9303).